Reading from the N-terminus, the 100-residue chain is Large ribosomal subunit protein bL21 (100 aa).

It belongs to the bacterial ribosomal protein bL21 family. As to quaternary structure, part of the 50S ribosomal subunit. Contacts protein L20.

This protein binds to 23S rRNA in the presence of protein L20. This is Large ribosomal subunit protein bL21 from Wolbachia pipientis subsp. Culex pipiens (strain wPip).